A 131-amino-acid polypeptide reads, in one-letter code: Small ribosomal subunit protein bS16 (131 aa).

The interval 87–131 (PGAEGTYRVPTANTKPPRIPGGGAAKAVEAPAEAPAEAETPASES) is disordered. Residues 111-131 (AKAVEAPAEAPAEAETPASES) show a composition bias toward low complexity.

This sequence belongs to the bacterial ribosomal protein bS16 family.

The sequence is that of Small ribosomal subunit protein bS16 from Kineococcus radiotolerans (strain ATCC BAA-149 / DSM 14245 / SRS30216).